A 519-amino-acid chain; its full sequence is Bifunctional dihydrofolate reductase-thymidylate synthase 1 (519 aa).

Ala2 carries the N-acetylalanine modification. One can recognise a DHFR domain in the interval 21–198 (TYQVVVAATK…LRFCFTTFVR (178 aa)). Position 25 (Val25) interacts with substrate. Residues Ala27 and 33–39 (GIGKDGK) each bind NADP(+). Asp47 serves as a coordination point for substrate. NADP(+)-binding positions include 71–73 (RKT) and 92–95 (LTRS). Ile134 is a substrate binding site. 135-142 (GGGDILRE) contributes to the NADP(+) binding site. A substrate-binding site is contributed by Thr155. The hinge stretch occupies residues 201-234 (SSADESSDESNGSQSLQFDGKKFLFLPKMVFDQH). The interval 235–519 (EEFLYLNMVE…HKKIEMKMAV (285 aa)) is thymidylate synthase. Arg256 provides a ligand contact to dUMP. Cys401 is a catalytic residue. DUMP contacts are provided by residues His402, 420-424 (QRSAD), Asn432, and 462-464 (HVY).

It in the N-terminal section; belongs to the dihydrofolate reductase family. In the C-terminal section; belongs to the thymidylate synthase family. Heterodimer or homodimer.

It catalyses the reaction (6S)-5,6,7,8-tetrahydrofolate + NADP(+) = 7,8-dihydrofolate + NADPH + H(+). The catalysed reaction is dUMP + (6R)-5,10-methylene-5,6,7,8-tetrahydrofolate = 7,8-dihydrofolate + dTMP. It functions in the pathway cofactor biosynthesis; tetrahydrofolate biosynthesis; 5,6,7,8-tetrahydrofolate from 7,8-dihydrofolate: step 1/1. Bifunctional enzyme. Involved in de novo dTMP biosynthesis. Key enzyme in folate metabolism. Can play two different roles depending on the source of dihydrofolate: de novo synthesis of tetrahydrofolate or recycling of the dihydrofolate released as one of the end products of the TS catalyzed reaction. Catalyzes an essential reaction for de novo glycine and purine synthesis, DNA precursor synthesis, and for the conversion of dUMP to dTMP. This Arabidopsis thaliana (Mouse-ear cress) protein is Bifunctional dihydrofolate reductase-thymidylate synthase 1 (THY-1).